Here is a 1073-residue protein sequence, read N- to C-terminus: 3-hydroxy-3-methylglutaryl-coenzyme A reductase 1 (1073 aa).

8 helical membrane passes run 23-43, 181-201, 211-231, 298-318, 326-346, 399-419, 459-479, and 498-518; these read FMVV…DDYI, FDIL…IKVF, FWLA…ALLV, HLVV…LTGL, SLIL…ILGL, IAYF…FWLG, GTVV…MVQL, and IISK…VYFL. Residues 182–346 form the SSD domain; sequence DILLIFVAYL…YTFFSAILGL (165 aa). The segment covering 542 to 565 has biased composition (low complexity); sequence SSVTATTTTTATGTTSSGAATSKT. The tract at residues 542 to 589 is disordered; it reads SSVTATTTTTATGTTSSGAATSKTIGNNKGLKSVQEIPDNEDESSDEE. Residues 579–589 are compositionally biased toward acidic residues; sequence PDNEDESSDEE. Glutamate 714 (charge relay system) is an active-site residue. 720-726 is a CoA binding site; that stretch reads STMRGCK. NADP(+) is bound by residues 781 to 783 and 808 to 816; these read SRF and DAMGMNMIS. Lysine 848 (charge relay system) is an active-site residue. 877-879 provides a ligand contact to CoA; sequence VLK. The active-site Charge relay system is the aspartate 924. The chain crosses the membrane as a helical span at residues 997–1017; it reads IVASAVLAAELSLCSALAAGH. 1021 to 1022 provides a ligand contact to CoA; that stretch reads SH. Histidine 1022 (proton donor) is an active-site residue. The interval 1025–1056 is disordered; the sequence is HNRSKAPAAGATTTTTPAITDSKASNGSIASN. Residue 1026–1027 coordinates NADP(+); the sequence is NR. Over residues 1030 to 1042 the composition is skewed to low complexity; sequence APAAGATTTTTPA. Over residues 1046–1055 the composition is skewed to polar residues; the sequence is SKASNGSIAS.

It belongs to the HMG-CoA reductase family.

Its subcellular location is the endoplasmic reticulum membrane. It catalyses the reaction (R)-mevalonate + 2 NADP(+) + CoA = (3S)-3-hydroxy-3-methylglutaryl-CoA + 2 NADPH + 2 H(+). It participates in metabolic intermediate biosynthesis; (R)-mevalonate biosynthesis; (R)-mevalonate from acetyl-CoA: step 3/3. In terms of biological role, HMG-CoA reductase; part of the first module of ergosterol biosynthesis pathway that includes the early steps of the pathway, conserved across all eukaryotes, and which results in the formation of mevalonate from acetyl-coenzyme A (acetyl-CoA). HMG1 catalyzes the reduction of hydroxymethylglutaryl-CoA (HMG-CoA) to mevalonate. The first module starts with the action of the cytosolic acetyl-CoA acetyltransferase ERG10 that catalyzes the formation of acetoacetyl-CoA. The hydroxymethylglutaryl-CoA synthase ERG13 then condenses acetyl-CoA with acetoacetyl-CoA to form HMG-CoA. The 3-hydroxy-3-methylglutaryl-coenzyme A (HMG-CoA) reductase HMG1 finally reduces HMG-CoA to produce mevalonate. This Candida albicans (strain SC5314 / ATCC MYA-2876) (Yeast) protein is 3-hydroxy-3-methylglutaryl-coenzyme A reductase 1.